Reading from the N-terminus, the 155-residue chain is DNA-directed RNA polymerase 1A (155 aa).

Residue aspartate 88 is part of the active site.

The protein belongs to the phage and mitochondrial RNA polymerase family.

It catalyses the reaction RNA(n) + a ribonucleoside 5'-triphosphate = RNA(n+1) + diphosphate. Its function is as follows. DNA-dependent RNA polymerase catalyzes the transcription of DNA into RNA using the four ribonucleoside triphosphates as substrates. The chain is DNA-directed RNA polymerase 1A (RPOT1-SYL) from Nicotiana tabacum (Common tobacco).